Here is a 221-residue protein sequence, read N- to C-terminus: Transmembrane protein 267 (221 aa).

5 helical membrane-spanning segments follow: residues 28–48 (ASAG…LPFI), 57–77 (LFDN…VIGL), 86–106 (VILA…MAGS), 121–141 (LHCS…MWAC), and 182–204 (ISYW…LMYL).

It localises to the membrane. The polypeptide is Transmembrane protein 267 (tmem267) (Danio rerio (Zebrafish)).